The following is a 785-amino-acid chain: DNA ligase (785 aa).

NAD(+) is bound by residues 32–36, 81–82, and Glu121; these read DAEYD and SL. Lys123 serves as the catalytic N6-AMP-lysine intermediate. Residues Arg144, Glu181, Lys294, and Lys318 each contribute to the NAD(+) site. Zn(2+) contacts are provided by Cys412, Cys415, Cys442, and Cys448. Residues 702–785 enclose the BRCT domain; it reads VEGLPEAGHT…AFLAKHNIPV (84 aa).

It belongs to the NAD-dependent DNA ligase family. LigA subfamily. Requires Mg(2+) as cofactor. Mn(2+) serves as cofactor.

It carries out the reaction NAD(+) + (deoxyribonucleotide)n-3'-hydroxyl + 5'-phospho-(deoxyribonucleotide)m = (deoxyribonucleotide)n+m + AMP + beta-nicotinamide D-nucleotide.. Functionally, DNA ligase that catalyzes the formation of phosphodiester linkages between 5'-phosphoryl and 3'-hydroxyl groups in double-stranded DNA using NAD as a coenzyme and as the energy source for the reaction. It is essential for DNA replication and repair of damaged DNA. This Pseudomonas fluorescens (strain SBW25) protein is DNA ligase.